The chain runs to 311 residues: Dihydroorotate dehydrogenase B (NAD(+)), catalytic subunit (311 aa).

FMN-binding positions include serine 24 and 48-49 (KA). Substrate is bound by residues lysine 48 and 72-76 (NAIGL). Positions 104 and 132 each coordinate FMN. Residue asparagine 132 participates in substrate binding. Catalysis depends on cysteine 135, which acts as the Nucleophile. FMN is bound by residues lysine 170 and isoleucine 196. 197 to 198 (NT) contacts substrate. Residues glycine 222, 248–249 (GG), and 270–271 (GT) each bind FMN.

Belongs to the dihydroorotate dehydrogenase family. Type 1 subfamily. As to quaternary structure, heterotetramer of 2 PyrK and 2 PyrD type B subunits. It depends on FMN as a cofactor.

It is found in the cytoplasm. It carries out the reaction (S)-dihydroorotate + NAD(+) = orotate + NADH + H(+). Its pathway is pyrimidine metabolism; UMP biosynthesis via de novo pathway; orotate from (S)-dihydroorotate (NAD(+) route): step 1/1. Its function is as follows. Catalyzes the conversion of dihydroorotate to orotate with NAD(+) as electron acceptor. The protein is Dihydroorotate dehydrogenase B (NAD(+)), catalytic subunit (pyrDB) of Lactococcus lactis subsp. lactis (strain IL1403) (Streptococcus lactis).